Here is a 374-residue protein sequence, read N- to C-terminus: S-adenosylmethionine:tRNA ribosyltransferase-isomerase (374 aa).

Belongs to the QueA family. Monomer.

The protein localises to the cytoplasm. It catalyses the reaction 7-aminomethyl-7-carbaguanosine(34) in tRNA + S-adenosyl-L-methionine = epoxyqueuosine(34) in tRNA + adenine + L-methionine + 2 H(+). The protein operates within tRNA modification; tRNA-queuosine biosynthesis. In terms of biological role, transfers and isomerizes the ribose moiety from AdoMet to the 7-aminomethyl group of 7-deazaguanine (preQ1-tRNA) to give epoxyqueuosine (oQ-tRNA). The chain is S-adenosylmethionine:tRNA ribosyltransferase-isomerase from Sorangium cellulosum (strain So ce56) (Polyangium cellulosum (strain So ce56)).